Consider the following 20-residue polypeptide: Sperm acrosome membrane-associated protein 3, processed form (20 aa).

Belongs to the glycosyl hydrolase 22 family.

Sperm surface membrane protein that may be involved in sperm-egg plasma membrane adhesion and fusion during fertilization. It could be a potential receptor for the egg oligosaccharide residue N-acetylglucosamine, which is present in the extracellular matrix over the egg plasma membrane. This is Sperm acrosome membrane-associated protein 3, processed form (SPACA3) from Vulpes vulpes (Red fox).